Reading from the N-terminus, the 331-residue chain is UPF0324 membrane protein YdhF (331 aa).

A run of 8 helical transmembrane segments spans residues Ser-2 to Leu-20, Ile-24 to Phe-46, Leu-82 to Met-104, Val-114 to Val-136, Ile-148 to Phe-170, Thr-204 to Phe-226, Ser-247 to Val-269, and Leu-308 to Ile-330.

Belongs to the UPF0324 family.

The protein resides in the cell membrane. The sequence is that of UPF0324 membrane protein YdhF (ydhF) from Lactococcus lactis subsp. lactis (strain IL1403) (Streptococcus lactis).